Consider the following 280-residue polypeptide: Nucleotide-binding protein Dgeo_0723 (280 aa).

Residue 8 to 15 participates in ATP binding; it reads GLSGSGKS. A GTP-binding site is contributed by 57–60; sequence DART.

It belongs to the RapZ-like family.

Displays ATPase and GTPase activities. This Deinococcus geothermalis (strain DSM 11300 / CIP 105573 / AG-3a) protein is Nucleotide-binding protein Dgeo_0723.